Here is a 943-residue protein sequence, read N- to C-terminus: 2-oxoglutarate dehydrogenase E1 component (943 aa).

It belongs to the alpha-ketoglutarate dehydrogenase family. Homodimer. Part of the 2-oxoglutarate dehydrogenase (OGDH) complex composed of E1 (2-oxoglutarate dehydrogenase), E2 (dihydrolipoamide succinyltransferase) and E3 (dihydrolipoamide dehydrogenase); the complex contains multiple copies of the three enzymatic components (E1, E2 and E3). Requires thiamine diphosphate as cofactor.

It catalyses the reaction N(6)-[(R)-lipoyl]-L-lysyl-[protein] + 2-oxoglutarate + H(+) = N(6)-[(R)-S(8)-succinyldihydrolipoyl]-L-lysyl-[protein] + CO2. Its function is as follows. E1 component of the 2-oxoglutarate dehydrogenase (OGDH) complex which catalyzes the decarboxylation of 2-oxoglutarate, the first step in the conversion of 2-oxoglutarate to succinyl-CoA and CO(2). In Shouchella clausii (strain KSM-K16) (Alkalihalobacillus clausii), this protein is 2-oxoglutarate dehydrogenase E1 component.